The sequence spans 321 residues: Serpentine receptor class delta-63 (321 aa).

7 helical membrane-spanning segments follow: residues 14–34, 41–61, 83–103, 128–148, 190–208, 240–260, and 273–293; these read LVYM…YNFT, VKYF…MAFA, YIGP…GIVV, LWTL…IVII, AAMS…GTYW, NFQI…YFMI, and TITV…IYFI.

It belongs to the nematode receptor-like protein srd family.

It localises to the membrane. This is Serpentine receptor class delta-63 (srd-63) from Caenorhabditis elegans.